The following is a 302-amino-acid chain: CASP-like protein 4A2 (302 aa).

A compositionally biased stretch (polar residues) spans 1 to 13 (MALQAQQQATPSP). A disordered region spans residues 1–134 (MALQAQQQAT…APPPHAQVRS (134 aa)). Residues 1–154 (MALQAQQQAT…RKRRAAVMQR (154 aa)) are Cytoplasmic-facing. A compositionally biased stretch (low complexity) spans 40 to 60 (VVVASTHHAAAAARYVPPRAT). Over residues 99 to 129 (KTPPPAPPLPAAPPPPPAASPAPAPRAPPPH) the composition is skewed to pro residues. The helical transmembrane segment at 155-175 (AALLARAAAAGLCLAALAVLA) threads the bilayer. Residues 176–197 (SDTRRGWARDSYSNYAQFRYSE) are Extracellular-facing. Residues 198–218 (AVNVVGFLYSVFQFVALAELM) form a helical membrane-spanning segment. At 219-238 (RRNKHLIPHPKRDLFDFTMD) the chain is on the cytoplasmic side. A helical transmembrane segment spans residues 239–256 (QVVAYLLISSSSSATARA). Topologically, residues 257 to 273 (SDLIENWGSDSFPSMAN) are extracellular. The chain crosses the membrane as a helical span at residues 274 to 294 (GSIAISFVAFVVFAICSLISA). Topologically, residues 295–302 (YNLFRRDM) are cytoplasmic.

The protein belongs to the Casparian strip membrane proteins (CASP) family. In terms of assembly, homodimer and heterodimers.

Its subcellular location is the cell membrane. The sequence is that of CASP-like protein 4A2 from Zea mays (Maize).